A 111-amino-acid chain; its full sequence is Dynein light chain Tctex-type (111 aa).

It belongs to the dynein light chain Tctex-type family.

It localises to the cytoplasm. Its subcellular location is the cytoskeleton. Functionally, acts as a non-catalytic accessory component of a dynein complex. The polypeptide is Dynein light chain Tctex-type (dlcA) (Dictyostelium discoideum (Social amoeba)).